We begin with the raw amino-acid sequence, 194 residues long: ATP-dependent Clp protease proteolytic subunit (194 aa).

S99 serves as the catalytic Nucleophile. H124 is an active-site residue.

It belongs to the peptidase S14 family. Fourteen ClpP subunits assemble into 2 heptameric rings which stack back to back to give a disk-like structure with a central cavity, resembling the structure of eukaryotic proteasomes.

It localises to the cytoplasm. The enzyme catalyses Hydrolysis of proteins to small peptides in the presence of ATP and magnesium. alpha-casein is the usual test substrate. In the absence of ATP, only oligopeptides shorter than five residues are hydrolyzed (such as succinyl-Leu-Tyr-|-NHMec, and Leu-Tyr-Leu-|-Tyr-Trp, in which cleavage of the -Tyr-|-Leu- and -Tyr-|-Trp bonds also occurs).. Functionally, cleaves peptides in various proteins in a process that requires ATP hydrolysis. Has a chymotrypsin-like activity. Plays a major role in the degradation of misfolded proteins. The chain is ATP-dependent Clp protease proteolytic subunit from Borrelia garinii subsp. bavariensis (strain ATCC BAA-2496 / DSM 23469 / PBi) (Borreliella bavariensis).